The primary structure comprises 49 residues: MRVNVTLACTECKRRNYITTKNKKNDPNRIEMKKYCRWCGSHTMHKETK.

Belongs to the bacterial ribosomal protein bL33 family.

In Desulforudis audaxviator (strain MP104C), this protein is Large ribosomal subunit protein bL33.